The following is a 375-amino-acid chain: MSTAGKVIRCKAAVLWKPGAPLTMEEIDVAPPKGKEVRVKMVAAGICGTDIKSLDNKKLAPFCPIIMGHEGTGIVESVGEGVSTVKTGDKVIILCLPQCGECNTCLNSKNNICKEVRLSGTHLTSEGNSRITCKGKTTYQYITTGTFSEYIVIKEISVAKVDEDALLEKACIIGCGFATGFGAAINSAKVSPGSTCAVFGLGGVGLSVIMGCKAAGAARIIAVDTNKDKFAKAKTVGATECIDPQDFEKPIQQVLFDMMNDGADFTFEVTGNPETVETALASCHKDHGVCVIVGSLASWIQLNINSHLFFSGRTLKGSVLGGWKTKEEIPKLVSDYTAKKFNLDPLITHTLTLDKVNEAIQLMKNGQCIRCVLLP.

Positions 47, 69, 99, 102, 105, 113, and 175 each coordinate Zn(2+). Residues 200–205 (GLGGVG), D224, K229, 293–295 (VGS), and R370 each bind NAD(+).

The protein belongs to the zinc-containing alcohol dehydrogenase family. Class-V subfamily. Dimer. Zn(2+) serves as cofactor. Liver.

It localises to the cytoplasm. The enzyme catalyses a primary alcohol + NAD(+) = an aldehyde + NADH + H(+). It catalyses the reaction a secondary alcohol + NAD(+) = a ketone + NADH + H(+). Alcohol dehydrogenase. Catalyzes the NAD-dependent oxidation of primary alcohols to the corresponding aldehydes. Oxidizes secondary alcohols to the corresponding ketones. This is Alcohol dehydrogenase 6 (ADH6) from Peromyscus maniculatus (North American deer mouse).